The primary structure comprises 903 residues: Alanine--tRNA ligase (903 aa).

Zn(2+) is bound by residues His591, His595, Cys695, and His699.

Belongs to the class-II aminoacyl-tRNA synthetase family. Zn(2+) is required as a cofactor.

Its subcellular location is the cytoplasm. It catalyses the reaction tRNA(Ala) + L-alanine + ATP = L-alanyl-tRNA(Ala) + AMP + diphosphate. Functionally, catalyzes the attachment of alanine to tRNA(Ala) in a two-step reaction: alanine is first activated by ATP to form Ala-AMP and then transferred to the acceptor end of tRNA(Ala). Also edits incorrectly charged Ser-tRNA(Ala) and Gly-tRNA(Ala) via its editing domain. The chain is Alanine--tRNA ligase from Methanosphaera stadtmanae (strain ATCC 43021 / DSM 3091 / JCM 11832 / MCB-3).